The primary structure comprises 188 residues: Aspartic protease inhibitor 11 (188 aa).

Asparagine 19 is a glycosylation site (N-linked (GlcNAc...) asparagine). Cystine bridges form between cysteine 48–cysteine 93, cysteine 142–cysteine 159, and cysteine 150–cysteine 153.

The protein belongs to the protease inhibitor I3 (leguminous Kunitz-type inhibitor) family.

The protein localises to the vacuole. Inhibitor of cathepsin D (aspartic protease) and trypsin (serine protease). May protect the plant by inhibiting proteases of invading organisms. This is Aspartic protease inhibitor 11 from Solanum tuberosum (Potato).